Consider the following 203-residue polypeptide: Ras-related protein RABG3b (203 aa).

Gly-15 to Thr-22 contacts GTP. The short motif at Tyr-37–Phe-45 is the Effector region element. Residues Asp-63 to Gln-67, Asn-125 to Asp-128, and Ser-158 to Ala-159 contribute to the GTP site. 2 S-geranylgeranyl cysteine lipidation sites follow: Cys-201 and Cys-203. Cys-203 is modified (cysteine methyl ester).

Belongs to the small GTPase superfamily. Rab family. As to quaternary structure, interacts with VPS39. Expressed in xylem cells of inflorescence stems.

Its subcellular location is the cell membrane. Functionally, intracellular vesicle trafficking and protein transport. Functions in autophagy. Involved in xylem and tracheary element differentiation. In Arabidopsis thaliana (Mouse-ear cress), this protein is Ras-related protein RABG3b (RABG3B).